We begin with the raw amino-acid sequence, 128 residues long: Large ribosomal subunit protein uL22 (128 aa).

It belongs to the universal ribosomal protein uL22 family. Part of the 50S ribosomal subunit.

Its function is as follows. This protein binds specifically to 23S rRNA; its binding is stimulated by other ribosomal proteins, e.g. L4, L17, and L20. It is important during the early stages of 50S assembly. It makes multiple contacts with different domains of the 23S rRNA in the assembled 50S subunit and ribosome. The globular domain of the protein is located near the polypeptide exit tunnel on the outside of the subunit, while an extended beta-hairpin is found that lines the wall of the exit tunnel in the center of the 70S ribosome. In Nitrobacter hamburgensis (strain DSM 10229 / NCIMB 13809 / X14), this protein is Large ribosomal subunit protein uL22.